The primary structure comprises 220 residues: Phosphatidylinositol phosphate synthase (220 aa).

A run of 2 helical transmembrane segments spans residues Leu-21–Leu-46 and Leu-52–Met-72. Asp-29–Thr-32 contributes to the a CDP-1,2-diacyl-sn-glycerol binding site. Mg(2+) is bound by residues Asp-66 and Asp-69. A CDP-1,2-diacyl-sn-glycerol is bound by residues Gly-70, Arg-74, and Thr-80. Mg(2+)-binding residues include Asp-87 and Asp-91. Asp-91 functions as the Proton acceptor in the catalytic mechanism. Transmembrane regions (helical) follow at residues Val-93–Trp-110, Val-116–Ala-134, Leu-154–Trp-171, and Met-177–Ala-194.

Belongs to the CDP-alcohol phosphatidyltransferase class-I family. As to quaternary structure, homodimer. Mg(2+) is required as a cofactor.

The protein localises to the cell membrane. It carries out the reaction a CDP-1,2-diacyl-sn-glycerol + 1D-myo-inositol 3-phosphate = a 1,2-diacyl-sn-glycero-3-phospho-(1D-myo-inositol-3-phosphate) + CMP + H(+). The enzyme catalyses 1,2-di-(9Z-octadecenoyl)-sn-glycero-3-cytidine-5'-diphosphate + 1D-myo-inositol 3-phosphate = 1,2-di-(9Z-octadecenoyl)-sn-glycero-3-phospho-(1D-myo-inositol-3-phosphate) + CMP + H(+). It functions in the pathway phospholipid metabolism; phosphatidylinositol phosphate biosynthesis. Functionally, catalyzes the conjugation of the 1'-hydroxyl group of D-myo-inositol-3-phosphate (also named L-myo-inositol-1-phosphate) with a lipid tail of cytidine diphosphate diacylglycerol (CDP-DAG), forming phosphatidylinositol phosphate (PIP) and CMP. PIP is a precursor of phosphatidylinositol (PI) which is an essential lipid for mycobacteria required for formation of their cell wall. The sequence is that of Phosphatidylinositol phosphate synthase from Mycobacteroides abscessus (strain ATCC 19977 / DSM 44196 / CCUG 20993 / CIP 104536 / JCM 13569 / NCTC 13031 / TMC 1543 / L948) (Mycobacterium abscessus).